A 122-amino-acid chain; its full sequence is Large ribosomal subunit protein uL14 (122 aa).

Belongs to the universal ribosomal protein uL14 family. Part of the 50S ribosomal subunit. Forms a cluster with proteins L3 and L19. In the 70S ribosome, L14 and L19 interact and together make contacts with the 16S rRNA in bridges B5 and B8.

Functionally, binds to 23S rRNA. Forms part of two intersubunit bridges in the 70S ribosome. The sequence is that of Large ribosomal subunit protein uL14 from Brachyspira hyodysenteriae (strain ATCC 49526 / WA1).